The primary structure comprises 251 residues: Protection of telomeres homolog 2 (251 aa).

The disordered stretch occupies residues Glu221–Gln251.

It belongs to the telombin family.

It localises to the nucleus. It is found in the chromosome. The protein resides in the telomere. Its function is as follows. Telomeric DNA-binding protein, which binds to two or more single-stranded G-rich repeat sequences (G-strand), with high specificity to the 5'-TTAGGC-3' sequence. In addition, repeat sequence binding requires a 3' single-stranded telomeric overhang. Acts redundantly with pot-1 to negatively regulate telomerase-mediated telomere extension. Also regulates telomere length by the telomerase-independent telomere maintenance pathway called ALT (alternative lengthening of telomeres). Does not appear to have a role in anchoring telomeres to the nuclear envelope. The polypeptide is Protection of telomeres homolog 2 (Caenorhabditis elegans).